The primary structure comprises 385 residues: tRNA pseudouridine synthase D (385 aa).

Asp86 (nucleophile) is an active-site residue. The TRUD domain maps to 165–305 (GFPNYFGNQR…TRFLQKDIAP (141 aa)).

The protein belongs to the pseudouridine synthase TruD family.

The catalysed reaction is uridine(13) in tRNA = pseudouridine(13) in tRNA. Responsible for synthesis of pseudouridine from uracil-13 in transfer RNAs. The chain is tRNA pseudouridine synthase D from Helicobacter hepaticus (strain ATCC 51449 / 3B1).